The primary structure comprises 760 residues: Formate acetyltransferase 1 (760 aa).

The 623-residue stretch at 3-625 (ELNEKLATAW…KTGNTPDGRR (623 aa)) folds into the PFL domain. N6-acetyllysine; alternate is present on K63. Position 63 is an N6-succinyllysine; alternate (K63). Position 107 is an N6-succinyllysine (K107). K117 carries the post-translational modification N6-acetyllysine; alternate. N6-succinyllysine; alternate is present on K117. At K124 the chain carries N6-succinyllysine. K195 is modified (N6-acetyllysine; alternate). K195 bears the N6-succinyllysine; alternate mark. C419 (S-acetylcysteine intermediate) is an active-site residue. Residue C420 is the Cysteine radical intermediate of the active site. K454 is subject to N6-acetyllysine; alternate. N6-succinyllysine; alternate is present on K454. K467 bears the N6-succinyllysine mark. 2 positions are modified to N6-acetyllysine: K541 and K591. A Glycine radical domain is found at 632–760 (PGANPMHGRD…VITRTFTQSM (129 aa)). The residue at position 654 (K654) is an N6-succinyllysine. G735 carries the post-translational modification Glycine radical.

Belongs to the glycyl radical enzyme (GRE) family. PFL subfamily. Homodimer. Interacts specifically with FocA.

It localises to the cytoplasm. The catalysed reaction is formate + acetyl-CoA = pyruvate + CoA. The protein operates within fermentation; pyruvate fermentation; formate from pyruvate: step 1/1. Catalyzes the conversion of pyruvate to formate and acetyl-CoA. In addition, may be involved in the control of the activity of the formate channel FocA, via direct interaction with FocA. The chain is Formate acetyltransferase 1 (pflB) from Escherichia coli (strain K12).